We begin with the raw amino-acid sequence, 505 residues long: Maturase K (505 aa).

Belongs to the intron maturase 2 family. MatK subfamily.

It localises to the plastid. It is found in the chloroplast. In terms of biological role, usually encoded in the trnK tRNA gene intron. Probably assists in splicing its own and other chloroplast group II introns. The polypeptide is Maturase K (Calycanthus floridus (Eastern sweetshrub)).